We begin with the raw amino-acid sequence, 161 residues long: Ureidoglycolate lyase (161 aa).

It belongs to the ureidoglycolate lyase family. Homodimer. It depends on Ni(2+) as a cofactor.

The catalysed reaction is (S)-ureidoglycolate = urea + glyoxylate. Its pathway is nitrogen metabolism; (S)-allantoin degradation. Functionally, catalyzes the catabolism of the allantoin degradation intermediate (S)-ureidoglycolate, generating urea and glyoxylate. Involved in the utilization of allantoin as nitrogen source. The sequence is that of Ureidoglycolate lyase from Rhodobacter capsulatus (strain ATCC BAA-309 / NBRC 16581 / SB1003).